We begin with the raw amino-acid sequence, 109 residues long: Iron-sulfur cluster assembly protein CyaY (109 aa).

The protein belongs to the frataxin family.

Involved in iron-sulfur (Fe-S) cluster assembly. May act as a regulator of Fe-S biogenesis. This is Iron-sulfur cluster assembly protein CyaY from Bordetella pertussis (strain Tohama I / ATCC BAA-589 / NCTC 13251).